Consider the following 376-residue polypeptide: 4-hydroxy-3-methylbut-2-en-1-yl diphosphate synthase (flavodoxin) (376 aa).

The [4Fe-4S] cluster site is built by Cys-270, Cys-273, Cys-305, and Glu-312.

It belongs to the IspG family. [4Fe-4S] cluster serves as cofactor.

The catalysed reaction is (2E)-4-hydroxy-3-methylbut-2-enyl diphosphate + oxidized [flavodoxin] + H2O + 2 H(+) = 2-C-methyl-D-erythritol 2,4-cyclic diphosphate + reduced [flavodoxin]. It participates in isoprenoid biosynthesis; isopentenyl diphosphate biosynthesis via DXP pathway; isopentenyl diphosphate from 1-deoxy-D-xylulose 5-phosphate: step 5/6. Functionally, converts 2C-methyl-D-erythritol 2,4-cyclodiphosphate (ME-2,4cPP) into 1-hydroxy-2-methyl-2-(E)-butenyl 4-diphosphate. This is 4-hydroxy-3-methylbut-2-en-1-yl diphosphate synthase (flavodoxin) from Colwellia psychrerythraea (strain 34H / ATCC BAA-681) (Vibrio psychroerythus).